Consider the following 710-residue polypeptide: Proline-rich receptor-like protein kinase PERK13 (710 aa).

The tract at residues 1–229 (MSDSPTSSPP…SVPPPANSGG (229 aa)) is disordered. At 1 to 235 (MSDSPTSSPP…NSGGGYQGKT (235 aa)) the chain is on the extracellular side. Pro residues-rich tracts occupy residues 7–21 (SSPP…PPPD), 29–130 (APPP…PPPP), 137–151 (PPAP…PPAS), and 168–188 (ATSP…PNAP). Residue Asn191 is glycosylated (N-linked (GlcNAc...) asparagine). Over residues 209 to 220 (SPSRGVPSSGNS) the composition is skewed to low complexity. Residues 236–256 (MAGFAIAGFAVIALMAVVFLV) traverse the membrane as a helical segment. Residues 257 to 710 (RRKKKRNIDA…ENRNFNNRRY (454 aa)) lie on the Cytoplasmic side of the membrane. Residues 289-334 (QNPTKGYSGPGGYNSQQQSNSGNSFGSQRGGGGYTRSGSAPDSAVM) are disordered. Low complexity predominate over residues 301 to 315 (YNSQQQSNSGNSFGS). Thr342 is subject to Phosphothreonine. The Protein kinase domain occupies 353–619 (FSKHNILGEG…RHSGPKRPRM (267 aa)). ATP-binding positions include 359–367 (LGEGGFGCV) and Lys381. Tyr426 bears the Phosphotyrosine mark. Residue Asp477 is the Proton acceptor of the active site. Phosphoserine is present on Ser510. 2 positions are modified to phosphothreonine: Thr511 and Thr516. A Phosphotyrosine modification is found at Tyr524. Residues 676–710 (SGDYSVQDSRKGSNGASSEFTRNETENRNFNNRRY) form a disordered region.

It belongs to the protein kinase superfamily. Ser/Thr protein kinase family. As to quaternary structure, interacts with KIPK1 and KIPK2 (via its cytosolic domain). Mostly expressed in roots, especially in root hairs.

The protein localises to the cell membrane. The enzyme catalyses L-seryl-[protein] + ATP = O-phospho-L-seryl-[protein] + ADP + H(+). It carries out the reaction L-threonyl-[protein] + ATP = O-phospho-L-threonyl-[protein] + ADP + H(+). In terms of biological role, negatively regulates root hair elongation. The polypeptide is Proline-rich receptor-like protein kinase PERK13 (PERK13) (Arabidopsis thaliana (Mouse-ear cress)).